A 407-amino-acid polypeptide reads, in one-letter code: L-cysteine:1D-myo-inositol 2-amino-2-deoxy-alpha-D-glucopyranoside ligase (407 aa).

A Zn(2+)-binding site is contributed by C43. Residues 43–46, T58, and 81–83 contribute to the L-cysteinyl-5'-AMP site; these read CGIT and NAT. The short motif at 45-55 is the 'HIGH' region element; it reads ITPYDATHLGH. Positions 183–188 match the 'ERGGDP' region motif; sequence QRGGDP. W223 lines the L-cysteinyl-5'-AMP pocket. Position 227 (C227) interacts with Zn(2+). Residue 245 to 247 participates in L-cysteinyl-5'-AMP binding; that stretch reads GSD. H252 contributes to the Zn(2+) binding site. V279 contacts L-cysteinyl-5'-AMP. A 'KMSKS' region motif is present at residues 285–289; sequence KMSKS.

The protein belongs to the class-I aminoacyl-tRNA synthetase family. MshC subfamily. Monomer. It depends on Zn(2+) as a cofactor.

It carries out the reaction 1D-myo-inositol 2-amino-2-deoxy-alpha-D-glucopyranoside + L-cysteine + ATP = 1D-myo-inositol 2-(L-cysteinylamino)-2-deoxy-alpha-D-glucopyranoside + AMP + diphosphate + H(+). Its function is as follows. Catalyzes the ATP-dependent condensation of GlcN-Ins and L-cysteine to form L-Cys-GlcN-Ins. This is L-cysteine:1D-myo-inositol 2-amino-2-deoxy-alpha-D-glucopyranoside ligase from Streptosporangium roseum (strain ATCC 12428 / DSM 43021 / JCM 3005 / KCTC 9067 / NCIMB 10171 / NRRL 2505 / NI 9100).